Reading from the N-terminus, the 377-residue chain is Signal peptide peptidase (377 aa).

Residues 1-27 (MDSALSDPHNGSAEAGGPTNSTTRPPS) form a disordered region. Over 1-31 (MDSALSDPHNGSAEAGGPTNSTTRPPSTPEG) the chain is Lumenal. Asn10 and Asn20 each carry an N-linked (GlcNAc...) asparagine glycan. A helical membrane pass occupies residues 32-52 (IALAYGSLLLMALLPIFFGAL). Over 53 to 77 (RSVRCARGKNASDMPETITSRDAAR) the chain is Cytoplasmic. A helical transmembrane segment spans residues 78–98 (FPIIASCTLLGLYLFFKIFSQ). The Lumenal portion of the chain corresponds to 99–100 (EY). The helical transmembrane segment at 101–121 (INLLLSMYFFVLGILALSHTI) threads the bilayer. Residues 122-157 (SPFMNKFFPASFPNRQYQLLFTQGSGENKEEIINYE) are Cytoplasmic-facing. A helical transmembrane segment spans residues 158–178 (FDTKDLVCLGLSSIVGVWYLL). Topologically, residues 179–181 (RKH) are lumenal. A helical membrane pass occupies residues 182 to 202 (WIANNLFGLAFSLNGVELLHL). At 203–209 (NNVSTGC) the chain is on the cytoplasmic side. A helical transmembrane segment spans residues 210–230 (ILLGGLFIYDVFWVFGTNVMV). The active site involves Asp219. Residues 231–256 (TVAKSFEAPIKLVFPQDLLEKGLEAN) are Lumenal-facing. Residues 257-277 (NFAMLGLGDVVIPGIFIALLL) traverse the membrane as a helical segment. Residue Asp265 is part of the active site. Topologically, residues 278-290 (RFDISLKKNTHTY) are cytoplasmic. Residues 291–311 (FYTSFAAYIFGLGLTIFIMHI) form a helical membrane-spanning segment. At 312–314 (FKH) the chain is on the lumenal side. Residues 315-335 (AQPALLYLVPACIGFPVLVAL) form a helical membrane-spanning segment. The PAL motif lies at 317 to 319 (PAL). Over 336 to 377 (AKGEVTEMFSYEESNPKDPAAVTESKEGTEASASKGLEKKEK) the chain is Cytoplasmic. Residues 345 to 377 (SYEESNPKDPAAVTESKEGTEASASKGLEKKEK) form a disordered region. Ser367 is modified (phosphoserine).

This sequence belongs to the peptidase A22B family. In terms of assembly, monomer. Homodimer. Interacts with RNF139. Interacts with DERL1 and XBP1 isoform 1. N-glycosylated. Widely expressed with highest levels in kidney, liver, placenta, lung, leukocytes and small intestine and reduced expression in heart and skeletal muscle. Expressed abundantly in the CNS with highest levels in thalamus and medulla.

Its subcellular location is the endoplasmic reticulum membrane. The protein localises to the membrane. It is found in the cell membrane. In terms of biological role, catalyzes intramembrane proteolysis of signal peptides that have been removed from precursors of secretory and membrane proteins, resulting in the release of the fragment from the ER membrane into the cytoplasm. Required to generate lymphocyte cell surface (HLA-E) epitopes derived from MHC class I signal peptides. May be necessary for the removal of the signal peptide that remains attached to the hepatitis C virus core protein after the initial proteolytic processing of the polyprotein. Involved in the intramembrane cleavage of the integral membrane protein PSEN1. Cleaves the integral membrane protein XBP1 isoform 1 in a DERL1/RNF139-dependent manner. May play a role in graft rejection. This chain is Signal peptide peptidase, found in Homo sapiens (Human).